The primary structure comprises 61 residues: MKMFFTVLVTLFVCSMIIGICEGREIPVKCKGSKQCLQSCKEAGMTYGKCMNGKCNCTPKG.

The signal sequence occupies residues 1 to 23; the sequence is MKMFFTVLVTLFVCSMIIGICEG. 3 disulfide bridges follow: C30/C50, C36/C55, and C40/C57. A Lysine amide modification is found at K60.

Expressed by the venom gland.

Its subcellular location is the secreted. In terms of biological role, inhibits voltage-gated potassium channel rKv1.1/KCNA1 at nanomolar ranges (IC(50)=90 +-2 nM, reduction of current by 30% at 50 nM or toxin). The protein is Potassium channel toxin alpha-KTx 3.18 of Mesobuthus eupeus (Lesser Asian scorpion).